The primary structure comprises 312 residues: Ribosomal protein L11 methyltransferase (312 aa).

Thr-162, Gly-183, Asp-205, and Asn-248 together coordinate S-adenosyl-L-methionine.

The protein belongs to the methyltransferase superfamily. PrmA family.

The protein localises to the cytoplasm. It carries out the reaction L-lysyl-[protein] + 3 S-adenosyl-L-methionine = N(6),N(6),N(6)-trimethyl-L-lysyl-[protein] + 3 S-adenosyl-L-homocysteine + 3 H(+). Its function is as follows. Methylates ribosomal protein L11. In Bacillus anthracis (strain A0248), this protein is Ribosomal protein L11 methyltransferase.